We begin with the raw amino-acid sequence, 330 residues long: ADP-L-glycero-D-manno-heptose-6-epimerase (330 aa).

NADP(+)-binding positions include 11–12 (FI), 32–33 (DD), Gln39, Gln54, 75–79 (QGACA), and Asn92. The Proton acceptor role is filled by Tyr139. Lys143 is a binding site for NADP(+). Position 168 (Asn168) interacts with substrate. Residues Val169 and Lys177 each coordinate NADP(+). The active-site Proton acceptor is the Lys177. Substrate-binding positions include Arg179, His186, 200–203 (FGEH), Arg213, and Tyr292.

The protein belongs to the NAD(P)-dependent epimerase/dehydratase family. HldD subfamily. Homopentamer. NADP(+) is required as a cofactor.

The catalysed reaction is ADP-D-glycero-beta-D-manno-heptose = ADP-L-glycero-beta-D-manno-heptose. It participates in nucleotide-sugar biosynthesis; ADP-L-glycero-beta-D-manno-heptose biosynthesis; ADP-L-glycero-beta-D-manno-heptose from D-glycero-beta-D-manno-heptose 7-phosphate: step 4/4. The protein operates within bacterial outer membrane biogenesis; LPS core biosynthesis. Catalyzes the interconversion between ADP-D-glycero-beta-D-manno-heptose and ADP-L-glycero-beta-D-manno-heptose via an epimerization at carbon 6 of the heptose. In Pseudomonas aeruginosa (strain ATCC 15692 / DSM 22644 / CIP 104116 / JCM 14847 / LMG 12228 / 1C / PRS 101 / PAO1), this protein is ADP-L-glycero-D-manno-heptose-6-epimerase.